The primary structure comprises 312 residues: Serine protease 48 (312 aa).

The first 22 residues, 1–22 (MGPAGLKVLLLLFLGAFQGSFT), serve as a signal peptide directing secretion. Residues 40-276 (IVGGQDAALG…YQKWISAIIS (237 aa)) form the Peptidase S1 domain. Cysteines 65 and 81 form a disulfide. Residues His-80 and Asp-126 each act as charge relay system in the active site. Residue Asn-149 is glycosylated (N-linked (GlcNAc...) asparagine). 3 disulfides stabilise this stretch: Cys-160-Cys-235, Cys-190-Cys-214, and Cys-225-Cys-253. Catalysis depends on Ser-229, which acts as the Charge relay system. Residue Asn-263 is glycosylated (N-linked (GlcNAc...) asparagine).

This sequence belongs to the peptidase S1 family.

It is found in the secreted. The polypeptide is Serine protease 48 (Prss48) (Mus musculus (Mouse)).